The following is a 205-amino-acid chain: Probable GTP-binding protein EngB (205 aa).

The EngB-type G domain maps to 27–201 (QGMEVAFAGR…QNKLNAWFSG (175 aa)). GTP is bound by residues 35–42 (GRSNAGKS), 62–66 (GRTQL), 80–83 (DLPG), 147–150 (TKVD), and 180–182 (FSS). Mg(2+) contacts are provided by Ser-42 and Thr-64.

Belongs to the TRAFAC class TrmE-Era-EngA-EngB-Septin-like GTPase superfamily. EngB GTPase family. Requires Mg(2+) as cofactor.

In terms of biological role, necessary for normal cell division and for the maintenance of normal septation. The protein is Probable GTP-binding protein EngB of Hamiltonella defensa subsp. Acyrthosiphon pisum (strain 5AT).